The following is a 691-amino-acid chain: DNA ligase (691 aa).

Residues 53–57 (DSEYD), 102–103 (SL), and Glu135 each bind NAD(+). Catalysis depends on Lys137, which acts as the N6-AMP-lysine intermediate. Arg158, Glu195, Lys310, and Lys334 together coordinate NAD(+). Zn(2+) is bound by residues Cys428, Cys431, Cys446, and Cys452. The BRCT domain occupies 613–691 (SEGLPLDGQT…EEEFLALVGE (79 aa)).

This sequence belongs to the NAD-dependent DNA ligase family. LigA subfamily. The cofactor is Mg(2+). Requires Mn(2+) as cofactor.

The enzyme catalyses NAD(+) + (deoxyribonucleotide)n-3'-hydroxyl + 5'-phospho-(deoxyribonucleotide)m = (deoxyribonucleotide)n+m + AMP + beta-nicotinamide D-nucleotide.. DNA ligase that catalyzes the formation of phosphodiester linkages between 5'-phosphoryl and 3'-hydroxyl groups in double-stranded DNA using NAD as a coenzyme and as the energy source for the reaction. It is essential for DNA replication and repair of damaged DNA. This chain is DNA ligase, found in Psychrobacter arcticus (strain DSM 17307 / VKM B-2377 / 273-4).